The following is a 315-amino-acid chain: Long form salivary protein D7L2 (315 aa).

The first 18 residues, 1-18 (MIVAPVVLSIFLQLFVQA), serve as a signal peptide directing secretion. 4 disulfide bridges follow: Cys37-Cys73, Cys69-Cys128, Cys178-Cys211, and Cys252-Cys263.

It belongs to the PBP/GOBP family. In terms of assembly, interacts with host coagulation factor XII/F12 (inactive and activated). Interacts with host coagulation factor XI/F11 (inactive).

The protein localises to the secreted. In terms of biological role, modulates blood feeding of female mosquitoes on vertebrate species by binding and sequestering different mediators involved in the host response. Binds leukotriene B4 and leukotriene D4. Exhibits anticoagulant activity targeting the intrinsic coagulation pathway; binds coagulation factors XII and XI, preventing generation of activated FXIIa and FXIa. This chain is Long form salivary protein D7L2, found in Anopheles gambiae (African malaria mosquito).